The sequence spans 675 residues: Potassium-transporting ATPase ATP-binding subunit (675 aa).

4 helical membrane-spanning segments follow: residues valine 38–valine 58, leucine 67–alanine 87, isoleucine 216–leucine 236, and isoleucine 253–isoleucine 273. Aspartate 304 (4-aspartylphosphate intermediate) is an active-site residue. Residues aspartate 341, glutamate 345, phenylalanine 371 to serine 378, and lysine 389 each bind ATP. Residues aspartate 512 and aspartate 516 each contribute to the Mg(2+) site. A run of 3 helical transmembrane segments spans residues phenylalanine 582–methionine 602, alanine 610–leucine 630, and glycine 654–methionine 674.

It belongs to the cation transport ATPase (P-type) (TC 3.A.3) family. Type IA subfamily. As to quaternary structure, the system is composed of three essential subunits: KdpA, KdpB and KdpC.

The protein localises to the cell membrane. The enzyme catalyses K(+)(out) + ATP + H2O = K(+)(in) + ADP + phosphate + H(+). Its function is as follows. Part of the high-affinity ATP-driven potassium transport (or Kdp) system, which catalyzes the hydrolysis of ATP coupled with the electrogenic transport of potassium into the cytoplasm. This subunit is responsible for energy coupling to the transport system and for the release of the potassium ions to the cytoplasm. The protein is Potassium-transporting ATPase ATP-binding subunit of Deinococcus radiodurans (strain ATCC 13939 / DSM 20539 / JCM 16871 / CCUG 27074 / LMG 4051 / NBRC 15346 / NCIMB 9279 / VKM B-1422 / R1).